A 133-amino-acid chain; its full sequence is MTGGKSGGKASGSKNAQSRSSKAGLAFPVGRVHRLLRKGNYAQRVGAGAPVYLAAVLEYLAAEILELAGNAARDNKKTRIIPRHLQLAIRNDEELNKLLGHVTIAQGGVLPNIHQNLLPKKTPKSGKGPSQEL.

Gly residues predominate over residues 1–10; that stretch reads MTGGKSGGKA. Residues 1–24 form a disordered region; it reads MTGGKSGGKASGSKNAQSRSSKAG. An N6-acetyllysine mark is found at K5 and K9. Q106 carries the N5-methylglutamine modification. A Phosphoserine modification is found at S130. A [ST]-Q motif motif is present at residues 130–131; that stretch reads SQ.

The protein belongs to the histone H2A family. In terms of assembly, the nucleosome is a histone octamer containing two molecules each of H2A, H2B, H3 and H4 assembled in one H3-H4 heterotetramer and two H2A-H2B heterodimers. The octamer wraps approximately 147 bp of DNA. In terms of processing, phosphorylated to form H2AS128ph (gamma-H2A) in response to DNA double-strand breaks (DSBs) generated by exogenous genotoxic agents and by stalled replication forks. Phosphorylation is dependent on the DNA damage checkpoint kinases mec1/ATR and tel1/ATM, spreads on either side of a detected DSB site and may mark the surrounding chromatin for recruitment of proteins required for DNA damage signaling and repair. Gamma-H2A is removed from the DNA prior to the strand invasion-primer extension step of the repair process and subsequently dephosphorylated. Dephosphorylation is necessary for efficient recovery from the DNA damage checkpoint. Post-translationally, acetylated by esa1 to form H2AK4ac and H2AK7ac.

It localises to the nucleus. It is found in the chromosome. Core component of nucleosome which plays a central role in DNA double strand break (DSB) repair. Nucleosomes wrap and compact DNA into chromatin, limiting DNA accessibility to the cellular machineries which require DNA as a template. Histones thereby play a central role in transcription regulation, DNA repair, DNA replication and chromosomal stability. DNA accessibility is regulated via a complex set of post-translational modifications of histones, also called histone code, and nucleosome remodeling. The chain is Histone H2A (hta1) from Aspergillus clavatus (strain ATCC 1007 / CBS 513.65 / DSM 816 / NCTC 3887 / NRRL 1 / QM 1276 / 107).